A 468-amino-acid polypeptide reads, in one-letter code: Cytochrome P450-like protein L532 (468 aa).

2 consecutive transmembrane segments (helical) span residues 22-42 (WFAY…FGLI) and 172-192 (VTVL…GVDV). Cys-415 contributes to the heme binding site.

The protein belongs to the cytochrome P450 family. Heme serves as cofactor.

Its subcellular location is the host membrane. It localises to the virion. The chain is Cytochrome P450-like protein L532 from Acanthamoeba polyphaga mimivirus (APMV).